Reading from the N-terminus, the 190-residue chain is ATP synthase subunit b 1 (190 aa).

The helical transmembrane segment at 35-55 (DFVVLLGFLLFLAILFYFGVP) threads the bilayer.

The protein belongs to the ATPase B chain family. In terms of assembly, F-type ATPases have 2 components, F(1) - the catalytic core - and F(0) - the membrane proton channel. F(1) has five subunits: alpha(3), beta(3), gamma(1), delta(1), epsilon(1). F(0) has three main subunits: a(1), b(2) and c(10-14). The alpha and beta chains form an alternating ring which encloses part of the gamma chain. F(1) is attached to F(0) by a central stalk formed by the gamma and epsilon chains, while a peripheral stalk is formed by the delta and b chains.

It localises to the cell inner membrane. In terms of biological role, f(1)F(0) ATP synthase produces ATP from ADP in the presence of a proton or sodium gradient. F-type ATPases consist of two structural domains, F(1) containing the extramembraneous catalytic core and F(0) containing the membrane proton channel, linked together by a central stalk and a peripheral stalk. During catalysis, ATP synthesis in the catalytic domain of F(1) is coupled via a rotary mechanism of the central stalk subunits to proton translocation. Its function is as follows. Component of the F(0) channel, it forms part of the peripheral stalk, linking F(1) to F(0). The chain is ATP synthase subunit b 1 from Jannaschia sp. (strain CCS1).